Reading from the N-terminus, the 395-residue chain is RNA ligase 1 (395 aa).

ATP-binding residues include Y48, R65, and K83. K113 acts as the N6-AMP-lysine intermediate in catalysis. E173, K255, and K257 together coordinate ATP. A Mg(2+)-binding site is contributed by D285.

The cofactor is Mg(2+). Requires Mn(2+) as cofactor.

It catalyses the reaction ATP + (ribonucleotide)n-3'-hydroxyl + 5'-phospho-(ribonucleotide)m = (ribonucleotide)n+m + AMP + diphosphate.. Its function is as follows. RNA ligase that ligates single-stranded nucleic acids in an ATP-dependent manner. Catalyzes both inter- and intra-molecular single-stranded DNA (ssDNA) ligation to &gt;50% completion in a matter of hours at an elevated temperature, although favoring intra-molecular ligation on RNA and single-stranded DNA substrates. Is able to catalyze the adenylation reaction of ssDNA 3'-terminal phosphate (ssDNA 3'p) to 3'-adenylated DNA (ssDNA 3'pp5'A). Does not have significant 3'-adenylation activity with a 3'-phosphorylated nicked dsDNA substrate. The polypeptide is RNA ligase 1 (Thermus scotoductus).